A 205-amino-acid polypeptide reads, in one-letter code: Holliday junction branch migration complex subunit RuvA (205 aa).

A domain I region spans residues 1–65 (MIAKLKGILD…EDRIHLFGFL (65 aa)). The segment at 66 to 144 (DNTEKVAFNM…NINTIANNTS (79 aa)) is domain II. Residues 145-153 (LAILSTDSN) are flexible linker. A domain III region spans residues 154 to 205 (THDNILSDAITALIALGISRAEATQILSDIYALFPSISVNELVRTALQRRAK).

Belongs to the RuvA family. As to quaternary structure, homotetramer. Forms an RuvA(8)-RuvB(12)-Holliday junction (HJ) complex. HJ DNA is sandwiched between 2 RuvA tetramers; dsDNA enters through RuvA and exits via RuvB. An RuvB hexamer assembles on each DNA strand where it exits the tetramer. Each RuvB hexamer is contacted by two RuvA subunits (via domain III) on 2 adjacent RuvB subunits; this complex drives branch migration. In the full resolvosome a probable DNA-RuvA(4)-RuvB(12)-RuvC(2) complex forms which resolves the HJ.

It localises to the cytoplasm. Its function is as follows. The RuvA-RuvB-RuvC complex processes Holliday junction (HJ) DNA during genetic recombination and DNA repair, while the RuvA-RuvB complex plays an important role in the rescue of blocked DNA replication forks via replication fork reversal (RFR). RuvA specifically binds to HJ cruciform DNA, conferring on it an open structure. The RuvB hexamer acts as an ATP-dependent pump, pulling dsDNA into and through the RuvAB complex. HJ branch migration allows RuvC to scan DNA until it finds its consensus sequence, where it cleaves and resolves the cruciform DNA. This chain is Holliday junction branch migration complex subunit RuvA, found in Orientia tsutsugamushi (strain Boryong) (Rickettsia tsutsugamushi).